A 336-amino-acid chain; its full sequence is Holliday junction branch migration complex subunit RuvB (336 aa).

The interval 1–184 (MYDEERIVSG…FGIVGHMEYY (184 aa)) is large ATPase domain (RuvB-L). Residues L23, R24, G65, K68, T69, T70, 131–133 (EDY), R174, Y184, and R221 each bind ATP. A Mg(2+)-binding site is contributed by T69. The small ATPAse domain (RuvB-S) stretch occupies residues 185–255 (NEVDLSQIIK…IVQFALDLLR (71 aa)). The interval 258-336 (KVGLDRTDRK…HLGIKYNKEG (79 aa)) is head domain (RuvB-H). DNA is bound by residues R313 and R318.

Belongs to the RuvB family. Homohexamer. Forms an RuvA(8)-RuvB(12)-Holliday junction (HJ) complex. HJ DNA is sandwiched between 2 RuvA tetramers; dsDNA enters through RuvA and exits via RuvB. An RuvB hexamer assembles on each DNA strand where it exits the tetramer. Each RuvB hexamer is contacted by two RuvA subunits (via domain III) on 2 adjacent RuvB subunits; this complex drives branch migration. In the full resolvosome a probable DNA-RuvA(4)-RuvB(12)-RuvC(2) complex forms which resolves the HJ.

It localises to the cytoplasm. The catalysed reaction is ATP + H2O = ADP + phosphate + H(+). Functionally, the RuvA-RuvB-RuvC complex processes Holliday junction (HJ) DNA during genetic recombination and DNA repair, while the RuvA-RuvB complex plays an important role in the rescue of blocked DNA replication forks via replication fork reversal (RFR). RuvA specifically binds to HJ cruciform DNA, conferring on it an open structure. The RuvB hexamer acts as an ATP-dependent pump, pulling dsDNA into and through the RuvAB complex. RuvB forms 2 homohexamers on either side of HJ DNA bound by 1 or 2 RuvA tetramers; 4 subunits per hexamer contact DNA at a time. Coordinated motions by a converter formed by DNA-disengaged RuvB subunits stimulates ATP hydrolysis and nucleotide exchange. Immobilization of the converter enables RuvB to convert the ATP-contained energy into a lever motion, pulling 2 nucleotides of DNA out of the RuvA tetramer per ATP hydrolyzed, thus driving DNA branch migration. The RuvB motors rotate together with the DNA substrate, which together with the progressing nucleotide cycle form the mechanistic basis for DNA recombination by continuous HJ branch migration. Branch migration allows RuvC to scan DNA until it finds its consensus sequence, where it cleaves and resolves cruciform DNA. The sequence is that of Holliday junction branch migration complex subunit RuvB from Ligilactobacillus salivarius (strain UCC118) (Lactobacillus salivarius).